The following is a 135-amino-acid chain: Small ribosomal subunit protein uS8 (135 aa).

This sequence belongs to the universal ribosomal protein uS8 family. In terms of assembly, part of the 30S ribosomal subunit. Contacts proteins S5 and S12.

Functionally, one of the primary rRNA binding proteins, it binds directly to 16S rRNA central domain where it helps coordinate assembly of the platform of the 30S subunit. This Cutibacterium acnes (strain DSM 16379 / KPA171202) (Propionibacterium acnes) protein is Small ribosomal subunit protein uS8.